Here is a 224-residue protein sequence, read N- to C-terminus: MPGSPRPAPSWVLLLRLLALLRPPGLGEACSCAPAHPQQHICHSALVIRAKISSEKVVPASADPADTEKMLRYEIKQIKMFKGFEKVKDVQYIYTPFDSSLCGVKLEANSQKQYLLTGQVLSDGKVFIHLCNYIEPWEDLSLVQRESLNHHYHLNCGCQITTCYTVPCTISAPNECLWTDWLLERKLYGYQAQHYVCMKHVDGTCSWYRGHLPLRKEFVDIVQP.

A signal peptide spans Met-1–Ala-29. Position 30 (Cys-30) interacts with Zn(2+). Involved in metalloproteinase-binding stretches follow at residues Cys-30–Ala-33 and Ser-99–Ser-100. 6 disulfide bridges follow: Cys-30/Cys-102, Cys-32/Cys-131, Cys-42/Cys-156, Cys-158/Cys-205, Cys-163/Cys-168, and Cys-176/Cys-197. One can recognise an NTR domain in the interval Cys-30–Cys-156.

The protein belongs to the protease inhibitor I35 (TIMP) family. In terms of tissue distribution, abundant in heart and present at low levels in many other tissues.

It localises to the secreted. In terms of biological role, complexes with metalloproteinases (such as collagenases) and irreversibly inactivates them by binding to their catalytic zinc cofactor. Known to act on MMP-1, MMP-2, MMP-3, MMP-7 and MMP-9. In Homo sapiens (Human), this protein is Metalloproteinase inhibitor 4 (TIMP4).